Consider the following 251-residue polypeptide: Hydroxyacylglutathione hydrolase (251 aa).

H53, H55, D57, H58, H110, D127, and H165 together coordinate Zn(2+).

This sequence belongs to the metallo-beta-lactamase superfamily. Glyoxalase II family. Monomer. Requires Zn(2+) as cofactor.

The enzyme catalyses an S-(2-hydroxyacyl)glutathione + H2O = a 2-hydroxy carboxylate + glutathione + H(+). It functions in the pathway secondary metabolite metabolism; methylglyoxal degradation; (R)-lactate from methylglyoxal: step 2/2. Thiolesterase that catalyzes the hydrolysis of S-D-lactoyl-glutathione to form glutathione and D-lactic acid. The polypeptide is Hydroxyacylglutathione hydrolase (Klebsiella pneumoniae subsp. pneumoniae (strain ATCC 700721 / MGH 78578)).